A 180-amino-acid chain; its full sequence is Adenine phosphoribosyltransferase (180 aa).

Belongs to the purine/pyrimidine phosphoribosyltransferase family. In terms of assembly, homodimer.

It is found in the cytoplasm. The enzyme catalyses AMP + diphosphate = 5-phospho-alpha-D-ribose 1-diphosphate + adenine. Its pathway is purine metabolism; AMP biosynthesis via salvage pathway; AMP from adenine: step 1/1. Functionally, catalyzes a salvage reaction resulting in the formation of AMP, that is energically less costly than de novo synthesis. The protein is Adenine phosphoribosyltransferase of Marinobacter nauticus (strain ATCC 700491 / DSM 11845 / VT8) (Marinobacter aquaeolei).